Reading from the N-terminus, the 154-residue chain is RING finger protein 11 (154 aa).

The span at M1–D12 shows a compositional bias: polar residues. Positions M1–P53 are disordered. G2 carries N-myristoyl glycine lipidation. C4 is lipidated: S-palmitoyl cysteine. Phosphoserine occurs at positions 14 and 25. Residues P37 to Y40 carry the PPxY motif motif. Over residues Q41 to P51 the composition is skewed to low complexity. The segment at C99 to M140 adopts an RING-type zinc-finger fold. A Phosphothreonine; by PKB/AKT1 modification is found at T135.

As to quaternary structure, interacts (when phosphorylated) with 14-3-3. Interacts with the E3 ubiquitin-ligases NEDD4, ITCH, SMURF2 and WWP1. Also interacts with the E2 ubiquitin-conjugating enzymes UBE2D1 and UBE2N, but neither with CDC34, nor with UBE2L3. Interacts with ZNF350, EPS15 and STAMBP. After TNF stimulation, interacts with TAX1BP1, TNFAIP3 and RIPK1; these interactions are transient and they are lost after 1 hour of stimulation with TNF. Interacts with GGA1. In terms of processing, ubiquitinated in the presence of ITCH, SMURF2 and UBE2D1, as well as WWP1. Phosphorylation by PKB/AKT1 may accelerate degradation by the proteasome. Post-translationally, acylation at both Gly-2 and Cys-4 is required for proper localization to the endosomes.

The protein resides in the early endosome. It is found in the recycling endosome. Its subcellular location is the cytoplasm. The protein localises to the nucleus. Its function is as follows. Essential component of a ubiquitin-editing protein complex, comprising also TNFAIP3, ITCH and TAX1BP1, that ensures the transient nature of inflammatory signaling pathways. Promotes the association of TNFAIP3 to RIPK1 after TNF stimulation. TNFAIP3 deubiquitinates 'Lys-63' polyubiquitin chains on RIPK1 and catalyzes the formation of 'Lys-48'-polyubiquitin chains. This leads to RIPK1 proteasomal degradation and consequently termination of the TNF- or LPS-mediated activation of NF-kappa-B. Recruits STAMBP to the E3 ubiquitin-ligase SMURF2 for ubiquitination, leading to its degradation by the 26S proteasome. This Bos taurus (Bovine) protein is RING finger protein 11 (RNF11).